Consider the following 148-residue polypeptide: Small ribosomal subunit protein bS6 (148 aa).

Positions 96-148 (HEEGQSAMLTRRDDRRERDGDDRPRRREGGFDRGDRGDRSPRRPRDNEAGEGA) are disordered.

The protein belongs to the bacterial ribosomal protein bS6 family.

In terms of biological role, binds together with bS18 to 16S ribosomal RNA. The sequence is that of Small ribosomal subunit protein bS6 from Brucella suis (strain ATCC 23445 / NCTC 10510).